The primary structure comprises 214 residues: Ribosomal RNA small subunit methyltransferase G (214 aa).

S-adenosyl-L-methionine-binding positions include Gly72, Phe77, 125–126, and Arg141; that span reads VE.

It belongs to the methyltransferase superfamily. RNA methyltransferase RsmG family.

It is found in the cytoplasm. It carries out the reaction guanosine(527) in 16S rRNA + S-adenosyl-L-methionine = N(7)-methylguanosine(527) in 16S rRNA + S-adenosyl-L-homocysteine. Specifically methylates the N7 position of guanine in position 527 of 16S rRNA. The protein is Ribosomal RNA small subunit methyltransferase G of Sinorhizobium fredii (strain NBRC 101917 / NGR234).